A 401-amino-acid chain; its full sequence is Haptoglobin (401 aa).

Positions Met1–Ala18 are cleaved as a signal peptide. 2 Sushi domains span residues Asp28–Glu83 and Asp85–Ala142. Disulfide bonds link Cys49–Cys81, Cys106–Cys140, and Cys144–Cys261. The Peptidase S1 domain maps to Ile157–Ala399. Residues Asn286 and Asn316 are each glycosylated (N-linked (GlcNAc...) asparagine). Intrachain disulfides connect Cys304-Cys335 and Cys346-Cys376. Positions Ala313–Thr318 are interaction with CD163.

Belongs to the peptidase S1 family. In terms of assembly, tetramer of two alpha and two beta chains; disulfide-linked. The hemoglobin/haptoglobin complex is composed of a haptoglobin dimer bound to two hemoglobin alpha-beta dimers. Interacts with CD163. Interacts with ERGIC3. In terms of tissue distribution, expressed by the liver and secreted in plasma.

The protein resides in the secreted. It is found in the extracellular space. As a result of hemolysis, hemoglobin is found to accumulate in the kidney and is secreted in the urine. Haptoglobin captures, and combines with free plasma hemoglobin to allow hepatic recycling of heme iron and to prevent kidney damage. Haptoglobin also acts as an antioxidant, has antibacterial activity and plays a role in modulating many aspects of the acute phase response. Hemoglobin/haptoglobin complexes are rapidly cleared by the macrophage CD163 scavenger receptor expressed on the surface of liver Kupfer cells through an endocytic lysosomal degradation pathway. This is Haptoglobin (HP) from Bos taurus (Bovine).